The chain runs to 172 residues: Macro domain-containing protein CT2219 (172 aa).

Residues methionine 1–glycine 172 enclose the Macro domain.

This sequence belongs to the MacroD-type family.

The polypeptide is Macro domain-containing protein CT2219 (Chlorobaculum tepidum (strain ATCC 49652 / DSM 12025 / NBRC 103806 / TLS) (Chlorobium tepidum)).